A 488-amino-acid polypeptide reads, in one-letter code: Glutamyl-tRNA(Gln) amidotransferase subunit A (488 aa).

Catalysis depends on charge relay system residues K77 and S152. S176 (acyl-ester intermediate) is an active-site residue.

Belongs to the amidase family. GatA subfamily. As to quaternary structure, heterotrimer of A, B and C subunits.

The enzyme catalyses L-glutamyl-tRNA(Gln) + L-glutamine + ATP + H2O = L-glutaminyl-tRNA(Gln) + L-glutamate + ADP + phosphate + H(+). Functionally, allows the formation of correctly charged Gln-tRNA(Gln) through the transamidation of misacylated Glu-tRNA(Gln) in organisms which lack glutaminyl-tRNA synthetase. The reaction takes place in the presence of glutamine and ATP through an activated gamma-phospho-Glu-tRNA(Gln). The protein is Glutamyl-tRNA(Gln) amidotransferase subunit A of Streptococcus gordonii (strain Challis / ATCC 35105 / BCRC 15272 / CH1 / DL1 / V288).